A 177-amino-acid polypeptide reads, in one-letter code: MSRVAKAPVVVPAGVDVKINGQVITIKGKNGELTRTLNDAVEVKHADNTLTFGPRDGYADGWAQAGTARALLNSMVIGVTEGFTKKLQLVGVGYRAAVKGNVINLSLGFSHPVDHQLPAGITAECPTQTEIVLKGADKQVIGQVAADLRAYRRPEPYKGKGVRYADEVVRTKEAKKK.

The residue at position 44 (K44) is an N6-acetyllysine.

The protein belongs to the universal ribosomal protein uL6 family. As to quaternary structure, part of the 50S ribosomal subunit.

Its function is as follows. This protein binds to the 23S rRNA, and is important in its secondary structure. It is located near the subunit interface in the base of the L7/L12 stalk, and near the tRNA binding site of the peptidyltransferase center. This is Large ribosomal subunit protein uL6 from Escherichia coli O139:H28 (strain E24377A / ETEC).